The following is a 66-amino-acid chain: Neurotoxin BmK AGP-SYPU1 (66 aa).

The LCN-type CS-alpha/beta domain maps to 2–64 (RDAYIAQNYN…KPIRIPGKCH (63 aa)). 4 disulfides stabilise this stretch: Cys-12/Cys-63, Cys-16/Cys-36, Cys-22/Cys-46, and Cys-26/Cys-48. Residues 65-66 (RR) constitute a propeptide, removed by a carboxypeptidase.

As to expression, expressed by the venom gland.

It localises to the secreted. In terms of biological role, alpha toxins bind voltage-independently at site-3 of sodium channels (Nav) and inhibit the inactivation of the activated channels, thereby blocking neuronal transmission. This toxin has a strong analgesic effect when administered to mice by intraperitoneal injection. In Olivierus martensii (Manchurian scorpion), this protein is Neurotoxin BmK AGP-SYPU1.